The sequence spans 355 residues: Protein-glutamate methylesterase/protein-glutamine glutaminase 3 (355 aa).

In terms of domain architecture, Response regulatory spans 5–122; it reads KVLIVDDSAV…KQFLEESRVR (118 aa). Asp-56 is subject to 4-aspartylphosphate. In terms of domain architecture, CheB-type methylesterase spans 165-355; it reads IQTTEKVVVV…IAREVLRLCG (191 aa). Residues Ser-177, His-203, and Asp-299 contribute to the active site.

This sequence belongs to the CheB family. Phosphorylated by CheA. Phosphorylation of the N-terminal regulatory domain activates the methylesterase activity.

The protein resides in the cytoplasm. The enzyme catalyses [protein]-L-glutamate 5-O-methyl ester + H2O = L-glutamyl-[protein] + methanol + H(+). The catalysed reaction is L-glutaminyl-[protein] + H2O = L-glutamyl-[protein] + NH4(+). Involved in chemotaxis. Part of a chemotaxis signal transduction system that modulates chemotaxis in response to various stimuli. Catalyzes the demethylation of specific methylglutamate residues introduced into the chemoreceptors (methyl-accepting chemotaxis proteins or MCP) by CheR. Also mediates the irreversible deamidation of specific glutamine residues to glutamic acid. The polypeptide is Protein-glutamate methylesterase/protein-glutamine glutaminase 3 (Geobacter metallireducens (strain ATCC 53774 / DSM 7210 / GS-15)).